We begin with the raw amino-acid sequence, 194 residues long: NAD(P)H-quinone oxidoreductase subunit I (194 aa).

2 4Fe-4S ferredoxin-type domains span residues 55–84 (GRIH…VDWE) and 95–124 (NHYS…MTEE). [4Fe-4S] cluster-binding residues include C64, C67, C70, C74, C104, C107, C110, and C114. Residues 173-194 (DLPANAPRPGARPEDLVEKTEA) form a disordered region. The span at 183–194 (ARPEDLVEKTEA) shows a compositional bias: basic and acidic residues.

Belongs to the complex I 23 kDa subunit family. In terms of assembly, NDH-1 is composed of at least 11 different subunits. Requires [4Fe-4S] cluster as cofactor.

Its subcellular location is the cellular thylakoid membrane. It catalyses the reaction a plastoquinone + NADH + (n+1) H(+)(in) = a plastoquinol + NAD(+) + n H(+)(out). The catalysed reaction is a plastoquinone + NADPH + (n+1) H(+)(in) = a plastoquinol + NADP(+) + n H(+)(out). In terms of biological role, NDH-1 shuttles electrons from an unknown electron donor, via FMN and iron-sulfur (Fe-S) centers, to quinones in the respiratory and/or the photosynthetic chain. The immediate electron acceptor for the enzyme in this species is believed to be plastoquinone. Couples the redox reaction to proton translocation, and thus conserves the redox energy in a proton gradient. The chain is NAD(P)H-quinone oxidoreductase subunit I from Nostoc sp. (strain PCC 7120 / SAG 25.82 / UTEX 2576).